The sequence spans 132 residues: Photosystem II extrinsic protein U (132 aa).

An N-terminal signal peptide occupies residues 1 to 29; it reads MKRLLSWLTGALVMAGLLSSLVLPSAVYA.

The protein belongs to the PsbU family. In terms of assembly, PSII is composed of 1 copy each of membrane proteins PsbA, PsbB, PsbC, PsbD, PsbE, PsbF, PsbH, PsbI, PsbJ, PsbK, PsbL, PsbM, PsbT, PsbX, PsbY, PsbZ, Psb30/Ycf12, peripheral proteins PsbO, CyanoQ (PsbQ), PsbU, PsbV and a large number of cofactors. It forms dimeric complexes.

Its subcellular location is the cellular thylakoid membrane. One of the extrinsic, lumenal subunits of photosystem II (PSII). PSII is a light-driven water plastoquinone oxidoreductase, using light energy to abstract electrons from H(2)O, generating a proton gradient subsequently used for ATP formation. The extrinsic proteins stabilize the structure of photosystem II oxygen-evolving complex (OEC), the ion environment of oxygen evolution and protect the OEC against heat-induced inactivation. This Synechococcus sp. (strain CC9902) protein is Photosystem II extrinsic protein U.